A 152-amino-acid chain; its full sequence is Xanthine-guanine phosphoribosyltransferase (152 aa).

5-phospho-alpha-D-ribose 1-diphosphate-binding positions include 37 to 38 (RG), arginine 69, and 88 to 96 (DDLVDTGGT). Residue arginine 69 coordinates GMP. Aspartate 89 provides a ligand contact to Mg(2+). Residues aspartate 92 and isoleucine 135 each contribute to the guanine site. Residues aspartate 92 and isoleucine 135 each contribute to the xanthine site. GMP is bound by residues 92–96 (DTGGT) and 134–135 (WI).

The protein belongs to the purine/pyrimidine phosphoribosyltransferase family. XGPT subfamily. In terms of assembly, homotetramer. Mg(2+) serves as cofactor.

Its subcellular location is the cell inner membrane. The enzyme catalyses GMP + diphosphate = guanine + 5-phospho-alpha-D-ribose 1-diphosphate. The catalysed reaction is XMP + diphosphate = xanthine + 5-phospho-alpha-D-ribose 1-diphosphate. It carries out the reaction IMP + diphosphate = hypoxanthine + 5-phospho-alpha-D-ribose 1-diphosphate. It functions in the pathway purine metabolism; GMP biosynthesis via salvage pathway; GMP from guanine: step 1/1. The protein operates within purine metabolism; XMP biosynthesis via salvage pathway; XMP from xanthine: step 1/1. Functionally, purine salvage pathway enzyme that catalyzes the transfer of the ribosyl-5-phosphate group from 5-phospho-alpha-D-ribose 1-diphosphate (PRPP) to the N9 position of the 6-oxopurines guanine and xanthine to form the corresponding ribonucleotides GMP (guanosine 5'-monophosphate) and XMP (xanthosine 5'-monophosphate), with the release of PPi. To a lesser extent, also acts on hypoxanthine. The chain is Xanthine-guanine phosphoribosyltransferase from Shigella boydii serotype 18 (strain CDC 3083-94 / BS512).